The primary structure comprises 226 residues: Ribonuclease 3 (226 aa).

Positions 7–129 constitute an RNase III domain; it reads LPRLCRTLSY…IIGAVYLDSD (123 aa). A Mg(2+)-binding site is contributed by glutamate 42. Residue aspartate 46 is part of the active site. Aspartate 115 and glutamate 118 together coordinate Mg(2+). Residue glutamate 118 is part of the active site. One can recognise a DRBM domain in the interval 156 to 226; it reads DAKTLLQEHL…AAQVLELLKK (71 aa).

Belongs to the ribonuclease III family. In terms of assembly, homodimer. Mg(2+) is required as a cofactor.

It localises to the cytoplasm. The enzyme catalyses Endonucleolytic cleavage to 5'-phosphomonoester.. In terms of biological role, digests double-stranded RNA. Involved in the processing of primary rRNA transcript to yield the immediate precursors to the large and small rRNAs (23S and 16S). Processes some mRNAs, and tRNAs when they are encoded in the rRNA operon. Processes pre-crRNA and tracrRNA of type II CRISPR loci if present in the organism. The sequence is that of Ribonuclease 3 from Shewanella baltica (strain OS223).